Reading from the N-terminus, the 141-residue chain is VLSAADKSNVKACWGKIGSHAGEYGAEALERTFCSFPTTKTYFPHFDLSHGSAQVKAHGQKVADALTQAVAHMDDLPTAMSALSDLHAYKLRVDPVNFKFLSHCLLVTLACHHPAEFTPAVHASLDKFFSAVSTVLTSKYR.

Positions 1-141 (VLSAADKSNV…VSTVLTSKYR (141 aa)) constitute a Globin domain. A Phosphoserine modification is found at Ser3. 2 positions are modified to N6-succinyllysine: Lys7 and Lys11. Position 16 is an N6-acetyllysine; alternate (Lys16). Lys16 carries the N6-succinyllysine; alternate modification. A Phosphotyrosine modification is found at Tyr24. Phosphoserine is present on Ser35. Lys40 carries the post-translational modification N6-succinyllysine. A Phosphoserine modification is found at Ser49. Position 58 (His58) interacts with O2. His87 contributes to the heme b binding site. The residue at position 102 (Ser102) is a Phosphoserine. Thr108 is subject to Phosphothreonine. A Phosphoserine modification is found at Ser124. Residues Thr134 and Thr137 each carry the phosphothreonine modification. A Phosphoserine modification is found at Ser138.

It belongs to the globin family. As to quaternary structure, heterotetramer of two alpha chains and two beta chains. Red blood cells.

Its function is as follows. Involved in oxygen transport from the lung to the various peripheral tissues. Functionally, hemopressin acts as an antagonist peptide of the cannabinoid receptor CNR1. Hemopressin-binding efficiently blocks cannabinoid receptor CNR1 and subsequent signaling. This is Hemoglobin subunit alpha (HBA) from Felis catus (Cat).